The primary structure comprises 364 residues: 3-isopropylmalate dehydrogenase (364 aa).

Position 78 to 91 (78 to 91 (GKKWDNFPIEERPE)) interacts with NAD(+). Residues R99, R109, R138, and D228 each coordinate substrate. Mg(2+) contacts are provided by D228, D252, and D256. 286-298 (GSAPDIAGKNIAN) provides a ligand contact to NAD(+).

It belongs to the isocitrate and isopropylmalate dehydrogenases family. LeuB type 1 subfamily. Homodimer. It depends on Mg(2+) as a cofactor. Mn(2+) is required as a cofactor.

The protein resides in the cytoplasm. The enzyme catalyses (2R,3S)-3-isopropylmalate + NAD(+) = 4-methyl-2-oxopentanoate + CO2 + NADH. Its pathway is amino-acid biosynthesis; L-leucine biosynthesis; L-leucine from 3-methyl-2-oxobutanoate: step 3/4. In terms of biological role, catalyzes the oxidation of 3-carboxy-2-hydroxy-4-methylpentanoate (3-isopropylmalate) to 3-carboxy-4-methyl-2-oxopentanoate. The product decarboxylates to 4-methyl-2 oxopentanoate. This chain is 3-isopropylmalate dehydrogenase, found in Buchnera aphidicola subsp. Uroleucon obscurum.